Reading from the N-terminus, the 395-residue chain is Vacuolar protease A (395 aa).

The signal sequence occupies residues methionine 1–alanine 18. The propeptide at lysine 19–glutamate 72 is activation peptide. A Peptidase A1 domain is found at tyrosine 87–alanine 392. Aspartate 105 is a catalytic residue. Cysteine 118 and cysteine 123 are oxidised to a cystine. A glycan (N-linked (GlcNAc...) asparagine) is linked at asparagine 140. Aspartate 289 is a catalytic residue. A disulfide bridge links cysteine 318 with cysteine 351. N-linked (GlcNAc...) asparagine glycosylation occurs at asparagine 335.

It belongs to the peptidase A1 family.

It is found in the vacuole lumen. It localises to the secreted. The enzyme catalyses Hydrolysis of proteins with broad specificity for peptide bonds. Cleaves -Leu-Leu-|-Val-Tyr- bond in a synthetic substrate. Does not act on esters of Tyr or Arg.. Functionally, vacuolar aspartic endopeptidase which is probably also secreted and contributes to virulence. In Arthroderma otae (strain ATCC MYA-4605 / CBS 113480) (Microsporum canis), this protein is Vacuolar protease A (PEP2).